The following is a 270-amino-acid chain: Tetraspanin-14 (270 aa).

At 1–17 (MHYYRYSNAEVSCWYKY) the chain is on the cytoplasmic side. The chain crosses the membrane as a helical span at residues 18–38 (LLFSYNIVFWLAGVVFLGVGL). The Extracellular segment spans residues 39–61 (WAWSEKGVLSDLTKVTRLHGIDP). A helical transmembrane segment spans residues 62-82 (VVLVLMVGVVMFTLGFAGCVG). Topologically, residues 83–92 (ALRENICLLK) are cytoplasmic. A helical membrane pass occupies residues 93–113 (FFCGAIVLIFFLELAVAVLAF). Over 114 to 232 (LFQDWVRDRF…QALEGWLPRN (119 aa)) the chain is Extracellular. The tract at residues 114–232 (LFQDWVRDRF…QALEGWLPRN (119 aa)) is necessary and sufficient for interaction with ADAM10. Intrachain disulfides connect Cys-153–Cys-221, Cys-154–Cys-186, Cys-170–Cys-180, and Cys-187–Cys-200. Residue Asn-169 is glycosylated (N-linked (GlcNAc...) asparagine). Residues 233–253 (IYIVAGVFIAISLLQIFGIFL) form a helical membrane-spanning segment. The Cytoplasmic segment spans residues 254–270 (ARTLISDIEAVKAGHHF).

It belongs to the tetraspanin (TM4SF) family. Interacts with ADAM10; the interaction promotes ADAM10 maturation and cell surface expression.

The protein localises to the cell membrane. Its function is as follows. Part of TspanC8 subgroup, composed of 6 members that interact with the transmembrane metalloprotease ADAM10. This interaction is required for ADAM10 exit from the endoplasmic reticulum and for enzymatic maturation and trafficking to the cell surface as well as substrate specificity. Different TspanC8/ADAM10 complexes have distinct substrates. Negatively regulates ADAM10-mediated cleavage of GP6. Promotes ADAM10-mediated cleavage of CDH5. The protein is Tetraspanin-14 (Tspan14) of Mus musculus (Mouse).